Consider the following 450-residue polypeptide: Signal recognition particle 54 kDa protein (450 aa).

Residues 107–114 (GIQGSGKT), 188–192 (DTAGR), and 247–250 (TKLD) contribute to the GTP site.

This sequence belongs to the GTP-binding SRP family. SRP54 subfamily. In terms of assembly, part of the signal recognition particle protein translocation system, which is composed of SRP and FtsY. Archaeal SRP consists of a 7S RNA molecule of 300 nucleotides and two protein subunits: SRP54 and SRP19.

The protein resides in the cytoplasm. The catalysed reaction is GTP + H2O = GDP + phosphate + H(+). In terms of biological role, involved in targeting and insertion of nascent membrane proteins into the cytoplasmic membrane. Binds to the hydrophobic signal sequence of the ribosome-nascent chain (RNC) as it emerges from the ribosomes. The SRP-RNC complex is then targeted to the cytoplasmic membrane where it interacts with the SRP receptor FtsY. The chain is Signal recognition particle 54 kDa protein from Methanococcus maripaludis (strain C5 / ATCC BAA-1333).